The following is a 306-amino-acid chain: Phosphatidylserine decarboxylase proenzyme (306 aa).

Residues D98, H155, and S259 each act as charge relay system; for autoendoproteolytic cleavage activity in the active site. S259 functions as the Schiff-base intermediate with substrate; via pyruvic acid; for decarboxylase activity in the catalytic mechanism. Position 259 is a pyruvic acid (Ser); by autocatalysis (S259).

It belongs to the phosphatidylserine decarboxylase family. PSD-B subfamily. Prokaryotic type I sub-subfamily. Heterodimer of a large membrane-associated beta subunit and a small pyruvoyl-containing alpha subunit. Pyruvate serves as cofactor. In terms of processing, is synthesized initially as an inactive proenzyme. Formation of the active enzyme involves a self-maturation process in which the active site pyruvoyl group is generated from an internal serine residue via an autocatalytic post-translational modification. Two non-identical subunits are generated from the proenzyme in this reaction, and the pyruvate is formed at the N-terminus of the alpha chain, which is derived from the carboxyl end of the proenzyme. The autoendoproteolytic cleavage occurs by a canonical serine protease mechanism, in which the side chain hydroxyl group of the serine supplies its oxygen atom to form the C-terminus of the beta chain, while the remainder of the serine residue undergoes an oxidative deamination to produce ammonia and the pyruvoyl prosthetic group on the alpha chain. During this reaction, the Ser that is part of the protease active site of the proenzyme becomes the pyruvoyl prosthetic group, which constitutes an essential element of the active site of the mature decarboxylase.

It is found in the cell membrane. The enzyme catalyses a 1,2-diacyl-sn-glycero-3-phospho-L-serine + H(+) = a 1,2-diacyl-sn-glycero-3-phosphoethanolamine + CO2. The protein operates within phospholipid metabolism; phosphatidylethanolamine biosynthesis; phosphatidylethanolamine from CDP-diacylglycerol: step 2/2. Functionally, catalyzes the formation of phosphatidylethanolamine (PtdEtn) from phosphatidylserine (PtdSer). The protein is Phosphatidylserine decarboxylase proenzyme of Nitrosococcus oceani (strain ATCC 19707 / BCRC 17464 / JCM 30415 / NCIMB 11848 / C-107).